Reading from the N-terminus, the 693-residue chain is Polyribonucleotide nucleotidyltransferase (693 aa).

D485 and D491 together coordinate Mg(2+). The 60-residue stretch at 552–611 folds into the KH domain; that stretch reads PRIMVLEINPSKIGDLIGPSGKNIKKIIEETHTTINIKPEGLVYISAPDQESAEKAAQMV. The region spanning 621 to 691 is the S1 motif domain; the sequence is GDIFLGKVIR…SSGRISLTRK (71 aa).

It belongs to the polyribonucleotide nucleotidyltransferase family. Mg(2+) serves as cofactor.

The protein resides in the cytoplasm. The catalysed reaction is RNA(n+1) + phosphate = RNA(n) + a ribonucleoside 5'-diphosphate. Involved in mRNA degradation. Catalyzes the phosphorolysis of single-stranded polyribonucleotides processively in the 3'- to 5'-direction. The chain is Polyribonucleotide nucleotidyltransferase from Dictyoglomus thermophilum (strain ATCC 35947 / DSM 3960 / H-6-12).